The chain runs to 217 residues: Phosphatidylserine decarboxylase proenzyme (217 aa).

S183 (schiff-base intermediate with substrate; via pyruvic acid) is an active-site residue. S183 carries the pyruvic acid (Ser); by autocatalysis modification.

Belongs to the phosphatidylserine decarboxylase family. PSD-A subfamily. In terms of assembly, heterodimer of a large membrane-associated beta subunit and a small pyruvoyl-containing alpha subunit. Pyruvate is required as a cofactor. Is synthesized initially as an inactive proenzyme. Formation of the active enzyme involves a self-maturation process in which the active site pyruvoyl group is generated from an internal serine residue via an autocatalytic post-translational modification. Two non-identical subunits are generated from the proenzyme in this reaction, and the pyruvate is formed at the N-terminus of the alpha chain, which is derived from the carboxyl end of the proenzyme. The post-translation cleavage follows an unusual pathway, termed non-hydrolytic serinolysis, in which the side chain hydroxyl group of the serine supplies its oxygen atom to form the C-terminus of the beta chain, while the remainder of the serine residue undergoes an oxidative deamination to produce ammonia and the pyruvoyl prosthetic group on the alpha chain.

It is found in the cell membrane. The enzyme catalyses a 1,2-diacyl-sn-glycero-3-phospho-L-serine + H(+) = a 1,2-diacyl-sn-glycero-3-phosphoethanolamine + CO2. It functions in the pathway phospholipid metabolism; phosphatidylethanolamine biosynthesis; phosphatidylethanolamine from CDP-diacylglycerol: step 2/2. Functionally, catalyzes the formation of phosphatidylethanolamine (PtdEtn) from phosphatidylserine (PtdSer). In Cupriavidus pinatubonensis (strain JMP 134 / LMG 1197) (Cupriavidus necator (strain JMP 134)), this protein is Phosphatidylserine decarboxylase proenzyme.